The sequence spans 131 residues: Small ribosomal subunit protein uS8 (131 aa).

This sequence belongs to the universal ribosomal protein uS8 family. As to quaternary structure, part of the 30S ribosomal subunit. Contacts proteins S5 and S12.

One of the primary rRNA binding proteins, it binds directly to 16S rRNA central domain where it helps coordinate assembly of the platform of the 30S subunit. This chain is Small ribosomal subunit protein uS8, found in Chlorobium luteolum (strain DSM 273 / BCRC 81028 / 2530) (Pelodictyon luteolum).